Consider the following 397-residue polypeptide: tRNA-specific 2-thiouridylase MnmA (397 aa).

ATP is bound by residues 19–26 and Leu-45; that span reads AMSGGVDS. The Nucleophile role is filled by Cys-113. Cysteines 113 and 210 form a disulfide. Gly-137 is an ATP binding site. The interaction with tRNA stretch occupies residues 160–162; sequence RDQ. The active-site Cysteine persulfide intermediate is the Cys-210.

It belongs to the MnmA/TRMU family.

It is found in the cytoplasm. It carries out the reaction S-sulfanyl-L-cysteinyl-[protein] + uridine(34) in tRNA + AH2 + ATP = 2-thiouridine(34) in tRNA + L-cysteinyl-[protein] + A + AMP + diphosphate + H(+). Functionally, catalyzes the 2-thiolation of uridine at the wobble position (U34) of tRNA, leading to the formation of s(2)U34. This Bradyrhizobium sp. (strain ORS 278) protein is tRNA-specific 2-thiouridylase MnmA.